The primary structure comprises 234 residues: Peptidase E (234 aa).

Residues Ser-123, Asp-138, and His-160 each act as charge relay system in the active site.

The protein belongs to the peptidase S51 family.

It localises to the cytoplasm. It carries out the reaction Dipeptidase E catalyzes the hydrolysis of dipeptides Asp-|-Xaa. It does not act on peptides with N-terminal Glu, Asn or Gln, nor does it cleave isoaspartyl peptides.. In terms of biological role, hydrolyzes dipeptides containing N-terminal aspartate residues. May play a role in allowing the cell to use peptide aspartate to spare carbon otherwise required for the synthesis of the aspartate family of amino acids. The protein is Peptidase E of Haemophilus influenzae (strain PittGG).